Reading from the N-terminus, the 257-residue chain is Outer membrane protein YaiO (257 aa).

The first 19 residues, 1 to 19, serve as a signal peptide directing secretion; the sequence is MIKRTLLAAAIFSALPAYA.

It is found in the cell outer membrane. This Escherichia coli (strain K12) protein is Outer membrane protein YaiO (yaiO).